Here is a 179-residue protein sequence, read N- to C-terminus: Adenine phosphoribosyltransferase (179 aa).

Belongs to the purine/pyrimidine phosphoribosyltransferase family. Homodimer.

It is found in the cytoplasm. It carries out the reaction AMP + diphosphate = 5-phospho-alpha-D-ribose 1-diphosphate + adenine. Its pathway is purine metabolism; AMP biosynthesis via salvage pathway; AMP from adenine: step 1/1. Catalyzes a salvage reaction resulting in the formation of AMP, that is energically less costly than de novo synthesis. In Bradyrhizobium diazoefficiens (strain JCM 10833 / BCRC 13528 / IAM 13628 / NBRC 14792 / USDA 110), this protein is Adenine phosphoribosyltransferase.